The following is a 332-amino-acid chain: Biotin synthase (332 aa).

The 227-residue stretch at 47–273 folds into the Radical SAM core domain; it reads YYGNKVKLNM…MNPTKEIRIA (227 aa). [4Fe-4S] cluster contacts are provided by C65, C69, and C72. Residues C109, C141, C201, and R271 each contribute to the [2Fe-2S] cluster site.

This sequence belongs to the radical SAM superfamily. Biotin synthase family. Homodimer. It depends on [4Fe-4S] cluster as a cofactor. Requires [2Fe-2S] cluster as cofactor.

The catalysed reaction is (4R,5S)-dethiobiotin + (sulfur carrier)-SH + 2 reduced [2Fe-2S]-[ferredoxin] + 2 S-adenosyl-L-methionine = (sulfur carrier)-H + biotin + 2 5'-deoxyadenosine + 2 L-methionine + 2 oxidized [2Fe-2S]-[ferredoxin]. The protein operates within cofactor biosynthesis; biotin biosynthesis; biotin from 7,8-diaminononanoate: step 2/2. Functionally, catalyzes the conversion of dethiobiotin (DTB) to biotin by the insertion of a sulfur atom into dethiobiotin via a radical-based mechanism. This is Biotin synthase from Geobacillus thermodenitrificans (strain NG80-2).